The primary structure comprises 285 residues: Protein unc-1 (285 aa).

2 helical membrane passes run 27 to 47 (IGTI…IVTF) and 69 to 89 (IGRL…IPCI).

The protein belongs to the band 7/mec-2 family.

It localises to the cell membrane. The protein localises to the cell junction. Its subcellular location is the gap junction. In Caenorhabditis elegans, this protein is Protein unc-1 (unc-1).